The sequence spans 83 residues: Kunitz-type serine protease inhibitor textilinin-7 (83 aa).

Positions 1–24 are cleaved as a signal peptide; that stretch reads MSSGGLLLLLGLLTLWEVLTPVSS. The region spanning 31-81 is the BPTI/Kunitz inhibitor domain; the sequence is CELLPDTGSCEDFTGAFHYSTRDRECIEFIYGGCGGNANNFKTLEECESTC. 3 disulfides stabilise this stretch: Cys31/Cys81, Cys40/Cys64, and Cys56/Cys77.

It belongs to the venom Kunitz-type family. Expressed by the venom gland.

The protein localises to the secreted. Its function is as follows. Serine protease inhibitor. The sequence is that of Kunitz-type serine protease inhibitor textilinin-7 from Pseudonaja textilis textilis (Eastern brown snake).